A 415-amino-acid polypeptide reads, in one-letter code: MAKNNTNRHYSLRKLKKGTASVAVALSVIGAGLVVNTNEVSARVFPRGTVENPDKARELLNKYDVENSMLQANNDKLTTENKNLTDQNKELKAEENRLTTENKGLTKKLSEAEEEAANKEQESKETIGTLKKILDETVKDKIAREQKSKQDIGALKQELAKKDEGNKVSEASRKGLRRDLDASREAKKQVEKDLANLTAELDKVKEEKQISDASRKGLRRDLDASREAKKQVEKDLANLTAELDKVKEEKQISDASRQGLRRDLDASREAKKQVEKALEEANSKLAALEKLNKELEESKKLTEKEKAELQAKLEAEAKALKEQLAKQAEELAKLRAGKASDSQTPDAKPGNKVVPGKGQAPQAGTKPNQNKAPMKETKRQLPSTGETANPFFTAAALTVMATAGVAAVVKRKEEN.

An N-terminal signal peptide occupies residues 1–42; it reads MAKNNTNRHYSLRKLKKGTASVAVALSVIGAGLVVNTNEVSA. Coiled-coil stretches lie at residues 54-133 and 170-340; these read DKAR…LKKI and EASR…GKAS. Repeat copies occupy residues 69-75, 76-82, and 83-89. The 5 X 7 AA approximate tandem repeats of [KMNR]-L-[TQ]-[TDA]-[ENQ]-N-[NDK] stretch occupies residues 69 to 103; sequence MLQANNDKLTTENKNLTDQNKELKAEENRLTTENK. Polar residues predominate over residues 75–86; the sequence is DKLTTENKNLTD. Disordered regions lie at residues 75–125, 157–189, 202–231, and 247–277; these read DKLT…ESKE, QELA…AKKQ, DKVK…AKKQ, and KEEK…VEKA. Basic and acidic residues-rich tracts occupy residues 87–100, 108–125, and 158–189; these read QNKE…RLTT, KLSE…ESKE, and ELAK…AKKQ. A 4; approximate repeat occupies 90-96; the sequence is ELKAEEN. Copy 5 of the repeat occupies 97-103; it reads RLTTENK. C repeat units follow at residues 160-194, 202-236, and 244-278; these read AKKD…EKDL, DKVK…EKDL, and DKVK…EKAL. Positions 211 to 279 are binding to CD46; that stretch reads SDASRKGLRR…AKKQVEKALE (69 aa). A two directly repeated 27 amino acid blocks separated by 15 amino acids region spans residues 211 to 279; the sequence is SDASRKGLRR…AKKQVEKALE (69 aa). Basic and acidic residues predominate over residues 260–277; the sequence is LRRDLDASREAKKQVEKA. The tract at residues 280-343 is hydrophilic; it reads EANSKLAALE…LRAGKASDSQ (64 aa). 4 D repeats span residues 311–316, 317–322, 325–330, and 332–337; these read AKLEAE, AKALKE, AKQAEE, and AKLRAG. The interval 332–387 is disordered; that stretch reads AKLRAGKASDSQTPDAKPGNKVVPGKGQAPQAGTKPNQNKAPMKETKRQLPSTGET. The short motif at 381–385 is the LPXTG sorting signal element; that stretch reads LPSTG. The residue at position 384 (T384) is a Pentaglycyl murein peptidoglycan amidated threonine. The propeptide at 385 to 415 is removed by sortase; sequence GETANPFFTAAALTVMATAGVAAVVKRKEEN.

Belongs to the M protein family.

Its subcellular location is the secreted. It is found in the cell wall. Its function is as follows. Mediates the attachment of S.pyogenes to skin epithelial cells through the binding of the human membrane cofactor protein CD46. Also binds to the factor H and factor H-like protein 1. These interactions could contribute to the fact that the M6 protein protects the bacterium from the phagocytosis by regulating the complement activation on the bacterial surface. The sequence is that of M protein, serotype 6 (emm6) from Streptococcus pyogenes serotype M6 (strain ATCC BAA-946 / MGAS10394).